Here is a 421-residue protein sequence, read N- to C-terminus: F-box only protein 5 (421 aa).

Residue Ser85 is modified to Phosphoserine. An interaction with EVI5 region spans residues 114–219 (ELEASRLYED…IGKKMGLEHL (106 aa)). Positions 223 to 273 (AELSRRGFVHLLANILTKLSGMDLVNLSKVSRIWKKILENNKGAFQLYSKT) constitute an F-box domain. The tract at residues 236–313 (NILTKLSGMD…KSSTWAPPKK (78 aa)) is sufficient for interaction with RPS6KA2; Prevents association of CDC20 with RPS6KA2. The requires for efficient binding to CDC20 stretch occupies residues 236-383 (NILTKLSGMD…SCQFEYCTKC (148 aa)). Positions 280 to 421 (SSKLSLHATT…KKSKKNLQRL (142 aa)) are inhibits APC ubiquitin ligase activity. The tract at residues 296–299 (RAAL) is competitively blocks access of APC substrates to the D-box coreceptor formed by FZR1 and ANAPC10. The ZBR-type zinc finger occupies 348 to 396 (SLKACVRCNFPAKYDHYLERAVCKRESCQFEYCTKCLCAYHNNKDCLNG). 8 residues coordinate Zn(2+): Cys352, Cys355, Cys370, Cys375, Cys380, Cys383, His388, and Cys393. Residues 352-394 (CVRCNFPAKYDHYLERAVCKRESCQFEYCTKCLCAYHNNKDCL) form an allows a rapid multiple mono-ubiquitination of the APC substrate, but strongly inhibits the slow ubiquitin chain elongation catalyzed by UBCH10 region. The tract at residues 411–421 (TKKSKKNLQRL) is sufficient to suppress UBE2S activity; essential for interaction with UBE2S; competitively inhibits the rapide ubiquitin chain elongation by UBE2D1 which blocks UBE2D1 with APC; indispensable for recruitment and position of FBXO5 to the catalytic site of APC; abrogates the inhibition of ubiquitin chain assembly primarily catalyzed by UBE2S; inhibits the ubiquitination by either UBE2C or UBE2D1.

In terms of assembly, part of a SCF (SKP1-cullin-F-box) protein ligase complex. Interacts with BTRC; mediates proteolysis by the SCF ubiquitin ligase complex leading to activation of APC in late mitosis and subsequent mitotic progression. Interacts with FZR1/CDH1 and the N-terminal substrate-binding domain of CDC20; prevents APC activation. Also interacts with EVI5 which blocks its phosphorylation by PLK1 and prevents its subsequent binding to BTRC and degradation. Interacts simultaneously with anaphase promoting complex (APC), through at least ANAPC2, CDC23, CDC27, the APC substrate GMNN and the APC activator FZR1. Interacts with UBE2S; interferes with the activity of UBE2S mainly by disrupting the dynamic electrostatic association between the C-terminal tail of UBE2S and ANAPC2. Interacts with RPS6KA2; cooperates to induce the metaphase arrest of early blastomeres; increases and stabilizes interaction of FBXO5 with CDC20. Post-translationally, phosphorylation by CDK2 and subsequently by PLK1 triggers degradation during early mitosis through ubiquitin-mediated proteolysis by the SCF ubiquitin ligase complex containing the F-box protein BTRC. This degradation is necessary for the activation of APC in late mitosis and subsequent mitotic progression. Phosphorylated by RPS6KA2; increases and stabilizes interaction with CDC20. Ubiquitinated by the SCF(BTRC) complex following phosphorylation by PLK1. Undergoes both 'Lys-11' and 'Lys-48'-linked polyubiquitination by APC-FZR1 complex leading to degradation during G1 phase by the proteasome. Degraded through the SCF(BTRC) complex; degradation occurs during oocyte maturation, between germinal vesicle breakdown (GVBD) and meiosis I, and is required for the meiosis I-meiosis II transition. As to expression, expressed in oocytes and granulosa cells. Expressed in proliferating cells compartments in hair follicle and skin epidermis, spermatogonia, and intestinal crypts.

It localises to the nucleus. Its subcellular location is the cytoplasm. The protein localises to the cytoskeleton. The protein resides in the spindle. It participates in protein modification; protein ubiquitination. Regulator of APC activity during mitotic and meiotic cell cycle. During mitotic cell cycle plays a role as both substrate and inhibitor of APC-FZR1 complex. During G1 phase, plays a role as substrate of APC-FZR1 complex E3 ligase. Then switches as an inhibitor of APC-FZR1 complex during S and G2 leading to cell-cycle commitment. As APC inhibitor, prevents the degradation of APC substrates at multiple levels: by interacting with APC and blocking access of APC substrates to the D-box co-receptor, formed by FZR1 and ANAPC10; by suppressing ubiquitin ligation and chain elongation by APC by preventing the UBE2C and UBE2S activities. Plays a role in genome integrity preservation by coordinating DNA replication with mitosis through APC inhibition in interphase to stabilize CCNA2 and GMNN in order to promote mitosis and prevent rereplication and DNA damage-induced cellular senescence. During oocyte maturation, plays a role in meiosis through inactivation of APC-FZR1 complex. Inhibits APC through RPS6KA2 interaction that increases FBXO5 affiniy for CDC20 leading to the metaphase arrest of the second meiotic division before fertilization. Controls entry into the first meiotic division through inactivation of APC-FZR1 complex. Promotes migration and osteogenic differentiation of mesenchymal stem cells. This is F-box only protein 5 from Mus musculus (Mouse).